Reading from the N-terminus, the 352-residue chain is E3 ubiquitin-protein ligase RNF146 (352 aa).

The segment at 36 to 74 (CAICLQTCVHPVSLPCKHVFCYLCVKGASWLGKRCALCR) adopts an RING-type zinc-finger fold. Residues Lys84 and Lys94 each participate in a glycyl lysine isopeptide (Lys-Gly) (interchain with G-Cter in ubiquitin) cross-link. Residues 91–167 (EELKAASRGN…EHGRRRKIKR (77 aa)) enclose the WWE domain. A glycoprotein contacts are provided by Tyr107, Arg110, and Trp114. Lys130 is covalently cross-linked (Glycyl lysine isopeptide (Lys-Gly) (interchain with G-Cter in ubiquitin)). A glycoprotein is bound by residues Tyr144, Gln153, Arg163, and Lys175. A Glycyl lysine isopeptide (Lys-Gly) (interchain with G-Cter in ubiquitin) cross-link involves residue Lys175. 3 disordered regions span residues 195–242 (SSAD…AGAS), 259–293 (ERSHRGEGEEDHESPSSGRVPDTSTEETESDASSD), and 317–352 (NQTVAERSDRPVAGGGTMSVNVRSRRPDGQCTVTEV). Residues 197–210 (ADGADSGSAHTGAS) are compositionally biased toward low complexity. Residues 215 to 233 (VPSSTRPLTSVDGQLTSPV) show a composition bias toward polar residues. Residues 282–293 (STEETESDASSD) are compositionally biased toward acidic residues. A phosphoserine mark is found at Ser288 and Ser292.

In terms of assembly, can form homooligomers. Interacts with PARsylated AXIN1, AXIN2, BLZF1, CASC3, H1-2, IPO7, LIG3, NCL, PARP1, XRCC1, XRCC5 and XRCC6. Interacts with DDB1, DHX15, IQGAP1, LRPPRC, PARP2, PRKDC, RUVBL2, TNKS1 and TNKS2. Binding often leads to interactor ubiquitination, in the presence of the appropriate E1 and E2 enzymes, and proteasomal degradation. Post-translationally, ubiquitinated; autoubiquitinated. Autoubiquitination is enhanced upon poly(ADP-ribose)-binding.

It is found in the cytoplasm. Its subcellular location is the cytosol. It localises to the nucleus. It carries out the reaction S-ubiquitinyl-[E2 ubiquitin-conjugating enzyme]-L-cysteine + [acceptor protein]-L-lysine = [E2 ubiquitin-conjugating enzyme]-L-cysteine + N(6)-ubiquitinyl-[acceptor protein]-L-lysine.. The protein operates within protein modification; protein ubiquitination. E3 ubiquitin-protein ligase that specifically binds poly-ADP-ribosylated (PARsylated) proteins and mediates their ubiquitination and subsequent degradation. May regulate many important biological processes, such as cell survival and DNA damage response. Acts as an activator of the Wnt signaling pathway by mediating the ubiquitination of PARsylated AXIN1 and AXIN2, 2 key components of the beta-catenin destruction complex. Acts in cooperation with tankyrase proteins (TNKS and TNKS2), which mediate PARsylation of target proteins AXIN1, AXIN2, BLZF1, CASC3, TNKS and TNKS2. Recognizes and binds tankyrase-dependent PARsylated proteins via its WWE domain and mediates their ubiquitination, leading to their degradation. Different ubiquitin linkage types have been observed: TNKS2 undergoes ubiquitination at 'Lys-48' and 'Lys-63', while AXIN1 is only ubiquitinated at 'Lys-48'. May regulate TNKS and TNKS2 subcellular location, preventing aggregation at a centrosomal location. Neuroprotective protein. Protects the brain against N-methyl-D-aspartate (NMDA) receptor-mediated glutamate excitotoxicity and ischemia, by interfering with PAR-induced cell death, called parthanatos. Prevents nuclear translocation of AIFM1 in a PAR-binding dependent manner. Does not affect PARP1 activation. Protects against cell death induced by DNA damaging agents, such as N-methyl-N-nitro-N-nitrosoguanidine (MNNG) and rescues cells from G1 arrest. Promotes cell survival after gamma-irradiation. Facilitates DNA repair. In Rattus norvegicus (Rat), this protein is E3 ubiquitin-protein ligase RNF146 (Rnf146).